A 284-amino-acid polypeptide reads, in one-letter code: Co-chaperone protein DjlA (284 aa).

Residues 1–6 (MHIFGK) lie on the Periplasmic side of the membrane. Residues 7-30 (ILGAFFGLLLGGPFGLLFGLFIGH) form a helical membrane-spanning segment. Residues 31 to 284 (QFDKARRLSQ…DLIKKVKGFK (254 aa)) are Cytoplasmic-facing. One can recognise a J domain in the interval 218–284 (DAYKILDVSP…DLIKKVKGFK (67 aa)).

As to quaternary structure, homodimer.

The protein localises to the cell inner membrane. Functionally, regulatory DnaK co-chaperone. Direct interaction between DnaK and DjlA is needed for the induction of the wcaABCDE operon, involved in the synthesis of a colanic acid polysaccharide capsule, possibly through activation of the RcsB/RcsC phosphotransfer signaling pathway. The colanic acid capsule may help the bacterium survive conditions outside the host. The sequence is that of Co-chaperone protein DjlA from Vibrio parahaemolyticus serotype O3:K6 (strain RIMD 2210633).